The following is a 249-amino-acid chain: Adapter protein MecA (249 aa).

It belongs to the MecA family. In terms of assembly, homodimer.

Enables the recognition and targeting of unfolded and aggregated proteins to the ClpC protease or to other proteins involved in proteolysis. The chain is Adapter protein MecA from Streptococcus thermophilus (strain CNRZ 1066).